The sequence spans 143 residues: Large ribosomal subunit protein uL15 (143 aa).

The tract at residues 1–52 (MKLNTLAPAAGSKSAPKRLGRGIGSGLGKTSGKGHKGQKARSGGYHKVGFEG) is disordered. Over residues 21–31 (RGIGSGLGKTS) the composition is skewed to gly residues.

The protein belongs to the universal ribosomal protein uL15 family. In terms of assembly, part of the 50S ribosomal subunit.

Its function is as follows. Binds to the 23S rRNA. The polypeptide is Large ribosomal subunit protein uL15 (Francisella tularensis subsp. holarctica (strain FTNF002-00 / FTA)).